Reading from the N-terminus, the 118-residue chain is Large ribosomal subunit protein bL20 (118 aa).

Belongs to the bacterial ribosomal protein bL20 family.

Its function is as follows. Binds directly to 23S ribosomal RNA and is necessary for the in vitro assembly process of the 50S ribosomal subunit. It is not involved in the protein synthesizing functions of that subunit. This Erwinia tasmaniensis (strain DSM 17950 / CFBP 7177 / CIP 109463 / NCPPB 4357 / Et1/99) protein is Large ribosomal subunit protein bL20.